A 1056-amino-acid chain; its full sequence is Pleckstrin homology domain-containing family M member 1 (1056 aa).

Residues 41–183 (TSEDGDANTM…LSFELSYKSA (143 aa)) enclose the RUN domain. Disordered regions lie at residues 215-245 (QRKE…RRNQ), 277-303 (GSKS…EDSD), and 360-422 (PAQA…QAHD). Residue Ser219 is modified to Phosphoserine. Positions 389–404 (PVESTSGQQPSSTVSE) are enriched in polar residues. Residues Ser432 and Ser435 each carry the phosphoserine modification. Residues 451-483 (SREQPLESASDHPIASYRGTPGSRPGLHRHFSQ) are disordered. Position 490 is a phosphoserine (Ser490). In terms of domain architecture, PH 1 spans 534–625 (GLMKLGTVER…WLDRVREALQ (92 aa)). The short motif at 632-638 (EDEWVNV) is the LIR element. Positions 654-1056 (CLSPSDLLSE…RKYQEQNIFA (403 aa)) are interaction with RAB7A. One can recognise a PH 2 domain in the interval 683–777 (DAIKESLLYL…WRDLVRKVLA (95 aa)). A Phorbol-ester/DAG-type zinc finger spans residues 986–1040 (QHVYHCDLCTQRGFICQICQHHDIIFPFEFDTTVRCAECKTVFHQSCQAVVKKGC).

In terms of assembly, interacts (via N- and C-terminus) with RAB7A (GTP-bound form). Simultaneously interacts with RAB7A and ARL8B; bringing about clustering and fusion of late endosomes and lysosomes. Interacts (via RUN domain) with ARL8B (GTP-bound form); the interaction is required for PLEKHM1 localization to lysosomes and for ARL8B function in delivery and degradation of endocytic and autophagic cargo in lysosomes. PLEKHM1 and PLEKHM2 compete for interaction with ARL8B. Interacts with ARL8A; the interaction is weaker than with ARL8B. Interacts with VPS41, VPS11, VPS18, VPS33A and VPS39; indicative for an association with the HOPS complex; the interactions with, at least, VPS41, VPS11, VPS18 and VPS33A require ARL8B. Interacts with GABARAP, GABARAPL, GABARAPL2, MAP1LC3A, MAP1LC3B and MAP1LC3C. Interacts with PAFAH1B. Interacts (via N- and C-terminus) with NDEL1. Interacts (via C-terminus) with MAP3K7. Interacts (via N- and C-terminus) with FAM98A. Interacts (via C-terminus) with DEF8; this interaction is weak but increased in a RAB7A-dependent manner. In colon carcinoma and breast carcinoma cells, it interacts with sialyl-lex-positive protein. (Microbial infection) Interacts with Salmonella typhimurium sifA. In terms of tissue distribution, expressed in placenta, liver, prostate, thymus, spleen, ovary, colon, colon carcinoma and peripheral blood lymphocytes (PBL). Weakly expressed in brain, lung, kidney, and testis. No expression in heart, skeletal muscle, pancreas and small intestine. Predominantly expressed in the breast carcinoma cell line MCF-7.

The protein resides in the autolysosome membrane. Its subcellular location is the endosome membrane. It localises to the late endosome membrane. It is found in the lysosome membrane. Acts as a multivalent adapter protein that regulates Rab7-dependent and HOPS complex-dependent fusion events in the endolysosomal system and couples autophagic and the endocytic trafficking pathways. Acts as a dual effector of RAB7A and ARL8B that simultaneously binds these GTPases, bringing about clustering and fusion of late endosomes and lysosomes. Required for late stages of endolysosomal maturation, facilitating both endocytosis-mediated degradation of growth factor receptors and autophagosome clearance. Interaction with Arl8b is a crucial factor in the terminal maturation of autophagosomes and to mediate autophagosome-lysosome fusion. Positively regulates lysosome peripheral distribution and ruffled border formation in osteoclasts. May be involved in negative regulation of endocytic transport from early endosome to late endosome/lysosome implicating its association with Rab7. May have a role in sialyl-lex-mediated transduction of apoptotic signals. Involved in bone resorption. In terms of biological role, (Microbial infection) In case of infection contributes to Salmonella typhimurium pathogenesis by supporting the integrity of the Salmonella-containing vacuole (SCV) probably in concert with the HOPS complex and Rab7. The protein is Pleckstrin homology domain-containing family M member 1 of Homo sapiens (Human).